Here is a 617-residue protein sequence, read N- to C-terminus: Electron transfer flavoprotein-ubiquinone oxidoreductase, mitochondrial (617 aa).

A mitochondrion-targeting transit peptide spans 1 to 33 (MMVPLAKLASPAYQCFHALKIKKNYLPLCATRW). 75 to 80 (GAGPAG) is an FAD binding site. Position 96 is an N6-acetyllysine (K96). The stretch at 109–130 (IGAHTLSGACLDPRAFEELFPD) is an intramembrane region. An N6-acetyllysine mark is found at K132 and K223. A ubiquinone is bound by residues G305 and G306. Position 357 is an N6-acetyllysine (K357). An intramembrane segment occupies 428–447 (IGLHVTEYEDNLKNSWVWKE). S551 carries the phosphoserine modification. [4Fe-4S] cluster is bound by residues C561, C586, C589, and C592. The 4Fe-4S ferredoxin-type domain maps to 577 to 606 (FRLQINAQNCVHCKTCDIKDPSQNINWVVP).

In terms of assembly, monomer. [4Fe-4S] cluster is required as a cofactor. Requires FAD as cofactor.

Its subcellular location is the mitochondrion inner membrane. It carries out the reaction a ubiquinone + reduced [electron-transfer flavoprotein] = a ubiquinol + oxidized [electron-transfer flavoprotein] + H(+). In terms of biological role, accepts electrons from ETF and reduces ubiquinone. The sequence is that of Electron transfer flavoprotein-ubiquinone oxidoreductase, mitochondrial (ETFDH) from Sus scrofa (Pig).